A 374-amino-acid polypeptide reads, in one-letter code: CMP-N-acetylneuraminate-beta-1,4-galactoside alpha-2,3-sialyltransferase (374 aa).

Over Met-1–Arg-8 the chain is Cytoplasmic. The chain crosses the membrane as a helical; Signal-anchor for type II membrane protein span at residues Asn-9–Trp-28. Over Lys-29–Ile-374 the chain is Lumenal. Asn-79 and Asn-170 each carry an N-linked (GlcNAc...) asparagine glycan. Cys-159 and Cys-313 are joined by a disulfide.

Belongs to the glycosyltransferase 29 family. Post-translationally, the soluble form derives from the membrane form by proteolytic processing. As to expression, found in all tissues tested. High expression found in brain, liver, kidney, colon, heart and lung.

It localises to the golgi apparatus. The protein localises to the golgi stack membrane. Its subcellular location is the secreted. It catalyses the reaction a beta-D-galactosyl-(1-&gt;4)-N-acetyl-beta-D-glucosaminyl derivative + CMP-N-acetyl-beta-neuraminate = an N-acetyl-alpha-neuraminyl-(2-&gt;3)-beta-D-galactosyl-(1-&gt;4)-N-acetyl-beta-D-glucosaminyl derivative + CMP + H(+). It participates in protein modification; protein glycosylation. Its function is as follows. Catalyzes the formation of the NeuAc-alpha-2,3-Gal-beta-1,4-GlcNAc-, NeuAc-alpha-2,3-Gal-beta-1,3-GlcNAc- and NeuAc-alpha-2,3-Gal-beta-1,3-GalNAc- sequences found in terminal carbohydrate groups of glycoproteins and glycolipids. The highest activity is toward Gal-beta-1,3-GlcNAc and the lowest toward Gal-beta-1,3-GalNAc. The chain is CMP-N-acetylneuraminate-beta-1,4-galactoside alpha-2,3-sialyltransferase (St3gal3) from Rattus norvegicus (Rat).